The chain runs to 278 residues: Ribosomal RNA small subunit methyltransferase A (278 aa).

Asn18, Leu20, Gly45, Glu66, Asp89, and Asn110 together coordinate S-adenosyl-L-methionine.

It belongs to the class I-like SAM-binding methyltransferase superfamily. rRNA adenine N(6)-methyltransferase family. RsmA subfamily.

It is found in the cytoplasm. It carries out the reaction adenosine(1518)/adenosine(1519) in 16S rRNA + 4 S-adenosyl-L-methionine = N(6)-dimethyladenosine(1518)/N(6)-dimethyladenosine(1519) in 16S rRNA + 4 S-adenosyl-L-homocysteine + 4 H(+). In terms of biological role, specifically dimethylates two adjacent adenosines (A1518 and A1519) in the loop of a conserved hairpin near the 3'-end of 16S rRNA in the 30S particle. May play a critical role in biogenesis of 30S subunits. The polypeptide is Ribosomal RNA small subunit methyltransferase A (Cupriavidus pinatubonensis (strain JMP 134 / LMG 1197) (Cupriavidus necator (strain JMP 134))).